Consider the following 99-residue polypeptide: Class II hydrophobin B (99 aa).

Residues 1–15 form the signal peptide; it reads MKFFAIAALFAGALA. Disulfide bonds link cysteine 30–cysteine 79 and cysteine 40–cysteine 70.

This sequence belongs to the cerato-ulmin hydrophobin family.

The protein resides in the secreted. Its subcellular location is the cell wall. It localises to the vacuole. It is found in the cytoplasmic vesicle. Functionally, aerial growth, conidiation, and dispersal of filamentous fungi in the environment rely upon a capability of their secreting small amphipathic proteins called hydrophobins (HPBs) with low sequence identity. Class I can self-assemble into an outermost layer of rodlet bundles on aerial cell surfaces, conferring cellular hydrophobicity that supports fungal growth, development and dispersal; whereas Class II form highly ordered films at water-air interfaces through intermolecular interactions but contribute nothing to the rodlet structure. Hyd2B contributes to certain cell wall-related features, such as hydrophobicity but is not involved in cell wall-related events during fungal proliferation in host hemocoel. Does not contribute to conidial hydrophobicity. Involved in insect hemocoel colonization independent of cell hydrophobicity. The sequence is that of Class II hydrophobin B from Beauveria bassiana (strain ARSEF 2860) (White muscardine disease fungus).